Consider the following 915-residue polypeptide: Scaffold attachment factor B1 (915 aa).

Residues 1 to 24 (MAETLSGLGDSGAAGAAALSSASS) are compositionally biased toward low complexity. The interval 1–33 (MAETLSGLGDSGAAGAAALSSASSETGTRRLSD) is disordered. An N-acetylalanine modification is found at A2. Residues S24 and S55 each carry the phosphoserine modification. One can recognise an SAP domain in the interval 31–65 (LSDLRVIDLRAELRKRNVDSSGNKSVLMERLKKAI). Residues 64–118 (AIEDEGGNPDEIEITSEGNKKTSKRSSKGRKPEEEGVEDNGLEENSGDGQEDVET) are disordered. A compositionally biased stretch (acidic residues) spans 67–77 (DEGGNPDEIEI). Phosphoserine is present on S79. Positions 98–118 (EGVEDNGLEENSGDGQEDVET) are enriched in acidic residues. Glycyl lysine isopeptide (Lys-Gly) (interchain with G-Cter in SUMO2) cross-links involve residues K172 and K186. T188 bears the Phosphothreonine mark. Phosphoserine occurs at positions 195, 197, and 209. A disordered region spans residues 221 to 407 (LGETCKSEPV…EKGRSSCGRN (187 aa)). Basic and acidic residues predominate over residues 225 to 234 (CKSEPVKEES). K231 is covalently cross-linked (Glycyl lysine isopeptide (Lys-Gly) (interchain with G-Cter in SUMO)). Polar residues predominate over residues 275–286 (SESTAHAQSSKA). The span at 293 to 309 (VKREPAEQPGDGERTDC) shows a compositional bias: basic and acidic residues. K294 participates in a covalent cross-link: Glycyl lysine isopeptide (Lys-Gly) (interchain with G-Cter in SUMO). Over residues 319 to 330 (EQSSAASELAEA) the composition is skewed to low complexity. Over residues 346-359 (EARDSKEDGRKFDF) the composition is skewed to basic and acidic residues. Over residues 371-383 (ESSTSEGADQKMS) the composition is skewed to polar residues. Residue K381 forms a Glycyl lysine isopeptide (Lys-Gly) (interchain with G-Cter in SUMO2) linkage. Residues S383 and S384 each carry the phosphoserine modification. The segment covering 390-401 (DTKRLSKEEKGR) has biased composition (basic and acidic residues). K392 participates in a covalent cross-link: Glycyl lysine isopeptide (Lys-Gly) (interchain with G-Cter in SUMO2). One can recognise an RRM domain in the interval 406-484 (RNFWVSGLSS…KMISVEKAKN (79 aa)). Phosphoserine is present on S415. Basic and acidic residues-rich tracts occupy residues 477–551 (ISVE…ERSR) and 559–570 (GTERTVVMDKSK). Disordered regions lie at residues 477-641 (ISVE…EREE), 671-708 (RERM…ERRP), and 749-915 (FDHR…TRRY). Residues K483, K514, K543, and K570 each participate in a glycyl lysine isopeptide (Lys-Gly) (interchain with G-Cter in SUMO2) cross-link. The tract at residues 528–792 (GDDGSGEKSK…RHGGPERHGR (265 aa)) is interaction with POLR2A. Interaction with SFRS1; SFRS9 and SFRS10. K578 participates in a covalent cross-link: Glycyl lysine isopeptide (Lys-Gly) (interchain with G-Cter in SUMO1); alternate. K578 participates in a covalent cross-link: Glycyl lysine isopeptide (Lys-Gly) (interchain with G-Cter in SUMO2); alternate. 4 positions are modified to phosphoserine: S580, S582, S601, and S604. The segment covering 581 to 641 (GSKERASKSQ…RMQAQWEREE (61 aa)) has biased composition (basic and acidic residues). The Nuclear localization signal motif lies at 599 to 616 (KRSVVSFDKVKEPRKSRD). Residues 599–915 (KRSVVSFDKV…PSDARFTRRY (317 aa)) are interaction with SAFB2. K607 is subject to N6-acetyllysine. The segment covering 749 to 796 (FDHRDRGRYPDHSVDRREGSRSMMGEREGQHYPERHGGPERHGRDSRD) has biased composition (basic and acidic residues). R811 bears the Omega-N-methylarginine mark. Basic and acidic residues-rich tracts occupy residues 817-832 (PRRD…DDRS) and 841-851 (MMDRDHKRWQG). K847 participates in a covalent cross-link: Glycyl lysine isopeptide (Lys-Gly) (interchain with G-Cter in SUMO2). R868, R874, and R884 each carry asymmetric dimethylarginine. Gly residues predominate over residues 892-901 (GMQGGFGGQS). The span at 905-915 (RPSDARFTRRY) shows a compositional bias: basic and acidic residues.

Monomer and homodimer. Forms heterodimers with SAFB2. Interacts with KHDRBS3. Interacts with CLK2. Interacts with POLR2A, SRSF1/ASF, SRSF9/SRp30c and SFSF10/TRA2B. Interacts with isoform 1 and isoform 2 of SRPK1 and inhibits its activity. Interacts with RBMX. Interacts with FUS. Interacts with ZBED4. Sumoylated by PIAS1 with SUMO1 and SUMO2/3, desumoylated by SENP1. Sumoylation is required for transcriptional repressor activity. In terms of tissue distribution, ubiquitous. Expressed at high levels in the CNS and at low levels in the liver. Expressed in a wide number of breast cancer cell lines.

It is found in the nucleus. Functionally, binds to scaffold/matrix attachment region (S/MAR) DNA and forms a molecular assembly point to allow the formation of a 'transcriptosomal' complex (consisting of SR proteins and RNA polymerase II) coupling transcription and RNA processing. Functions as an estrogen receptor corepressor and can also bind to the HSP27 promoter and decrease its transcription. Thereby acts as a negative regulator of cell proliferation. When associated with RBMX, binds to and stimulates transcription from the SREBF1 promoter. In Homo sapiens (Human), this protein is Scaffold attachment factor B1 (SAFB).